The sequence spans 375 residues: Mitogen-activated protein kinase 1 (375 aa).

Residues 43–329 (RPPIMPIGRG…VEEALAHPYL (287 aa)) form the Protein kinase domain. ATP is bound by residues 49-57 (IGRGAYGIV) and K72. The active-site Proton acceptor is D169. A Phosphothreonine modification is found at T201. The TXY signature appears at 201 to 203 (TEY). The residue at position 203 (Y203) is a Phosphotyrosine. A Phosphothreonine modification is found at T206.

This sequence belongs to the protein kinase superfamily. CMGC Ser/Thr protein kinase family. MAP kinase subfamily. Mg(2+) serves as cofactor. Activated by wounding and UV-C in a cultivar-dependent manner; phosphorylated in cv. Pungchon but not in cv. Subicho.

It catalyses the reaction L-seryl-[protein] + ATP = O-phospho-L-seryl-[protein] + ADP + H(+). The enzyme catalyses L-threonyl-[protein] + ATP = O-phospho-L-threonyl-[protein] + ADP + H(+). Activated by threonine and tyrosine phosphorylation. Stress-inducible protein kinase involved in oxidative stress-mediated and innate immune MAP kinase signaling cascades. The sequence is that of Mitogen-activated protein kinase 1 from Capsicum annuum (Capsicum pepper).